Here is a 104-residue protein sequence, read N- to C-terminus: Small ribosomal subunit protein uS10 (104 aa).

Belongs to the universal ribosomal protein uS10 family. In terms of assembly, part of the 30S ribosomal subunit.

Its function is as follows. Involved in the binding of tRNA to the ribosomes. The protein is Small ribosomal subunit protein uS10 of Albidiferax ferrireducens (strain ATCC BAA-621 / DSM 15236 / T118) (Rhodoferax ferrireducens).